Here is a 353-residue protein sequence, read N- to C-terminus: Photosystem II protein D1 (353 aa).

At threonine 2 the chain carries N-acetylthreonine. At threonine 2 the chain carries Phosphothreonine. The next 3 membrane-spanning stretches (helical) occupy residues tyrosine 29 to serine 46, histidine 118 to leucine 133, and tryptophan 142 to alanine 156. Histidine 118 contributes to the chlorophyll a binding site. Tyrosine 126 provides a ligand contact to pheophytin a. 2 residues coordinate [CaMn4O5] cluster: aspartate 170 and glutamate 189. A helical transmembrane segment spans residues phenylalanine 197 to leucine 218. Histidine 198 serves as a coordination point for chlorophyll a. A quinone-binding positions include histidine 215 and serine 264–phenylalanine 265. Histidine 215 is a Fe cation binding site. Histidine 272 is a binding site for Fe cation. The helical transmembrane segment at phenylalanine 274–leucine 288 threads the bilayer. Histidine 332, glutamate 333, aspartate 342, and alanine 344 together coordinate [CaMn4O5] cluster. The propeptide occupies serine 345–glycine 353.

This sequence belongs to the reaction center PufL/M/PsbA/D family. In terms of assembly, PSII is composed of 1 copy each of membrane proteins PsbA, PsbB, PsbC, PsbD, PsbE, PsbF, PsbH, PsbI, PsbJ, PsbK, PsbL, PsbM, PsbT, PsbX, PsbY, PsbZ, Psb30/Ycf12, at least 3 peripheral proteins of the oxygen-evolving complex and a large number of cofactors. It forms dimeric complexes. Requires The D1/D2 heterodimer binds P680, chlorophylls that are the primary electron donor of PSII, and subsequent electron acceptors. It shares a non-heme iron and each subunit binds pheophytin, quinone, additional chlorophylls, carotenoids and lipids. D1 provides most of the ligands for the Mn4-Ca-O5 cluster of the oxygen-evolving complex (OEC). There is also a Cl(-1) ion associated with D1 and D2, which is required for oxygen evolution. The PSII complex binds additional chlorophylls, carotenoids and specific lipids. as cofactor. Post-translationally, tyr-161 forms a radical intermediate that is referred to as redox-active TyrZ, YZ or Y-Z. In terms of processing, C-terminally processed by CTPA; processing is essential to allow assembly of the oxygen-evolving complex and thus photosynthetic growth.

It is found in the plastid. Its subcellular location is the chloroplast thylakoid membrane. It catalyses the reaction 2 a plastoquinone + 4 hnu + 2 H2O = 2 a plastoquinol + O2. Photosystem II (PSII) is a light-driven water:plastoquinone oxidoreductase that uses light energy to abstract electrons from H(2)O, generating O(2) and a proton gradient subsequently used for ATP formation. It consists of a core antenna complex that captures photons, and an electron transfer chain that converts photonic excitation into a charge separation. The D1/D2 (PsbA/PsbD) reaction center heterodimer binds P680, the primary electron donor of PSII as well as several subsequent electron acceptors. The chain is Photosystem II protein D1 from Adiantum capillus-veneris (Maidenhair fern).